A 90-amino-acid chain; its full sequence is Small ribosomal subunit protein bS18 (90 aa).

It belongs to the bacterial ribosomal protein bS18 family. In terms of assembly, part of the 30S ribosomal subunit. Forms a tight heterodimer with protein bS6.

In terms of biological role, binds as a heterodimer with protein bS6 to the central domain of the 16S rRNA, where it helps stabilize the platform of the 30S subunit. The sequence is that of Small ribosomal subunit protein bS18 from Bacteroides thetaiotaomicron (strain ATCC 29148 / DSM 2079 / JCM 5827 / CCUG 10774 / NCTC 10582 / VPI-5482 / E50).